A 450-amino-acid chain; its full sequence is Allergen Fus c 3 (450 aa).

Disordered stretches follow at residues 18 to 87 (EPEM…SRAQ), 99 to 148 (DLHA…HLPP), 185 to 377 (SGHP…NLVE), and 398 to 426 (QIRH…RRVS). Residues 31–46 (PHQQPISSPNRTSRNT) show a composition bias toward polar residues. Residues 101-112 (HAPSHPSHLSHG) show a composition bias toward low complexity. Basic and acidic residues predominate over residues 113–125 (APHEQEHAHEIQR). The segment covering 272–286 (RPRKPARARRQKKEP) has biased composition (basic residues). Residues 291-304 (DASQGARSSSTGGT) show a composition bias toward polar residues. The span at 305–341 (AHSVSDAASPSSTSHQSRASLTSKSASMTSAASTASS) shows a compositional bias: low complexity. The segment covering 356–377 (TLDKPNDTAEDRRTRASHNLVE) has biased composition (basic and acidic residues). Positions 368-441 (RTRASHNLVE…EMARRHIEAL (74 aa)) constitute a bHLH domain.

The sequence is that of Allergen Fus c 3 from Fusarium culmorum.